The chain runs to 781 residues: Penicillin-binding protein 1B (781 aa).

Residues F151–Q322 form a transglycosylase region. Residue E188 is the Proton donor; for transglycosylase activity of the active site. A transpeptidase region spans residues S415–N702. Catalysis depends on S466, which acts as the Acyl-ester intermediate; for transpeptidase activity. Residues E749 to S768 are compositionally biased toward low complexity. Residues E749–Q781 are disordered.

In the N-terminal section; belongs to the glycosyltransferase 51 family. It in the C-terminal section; belongs to the transpeptidase family.

The protein localises to the cell inner membrane. It carries out the reaction [GlcNAc-(1-&gt;4)-Mur2Ac(oyl-L-Ala-gamma-D-Glu-L-Lys-D-Ala-D-Ala)](n)-di-trans,octa-cis-undecaprenyl diphosphate + beta-D-GlcNAc-(1-&gt;4)-Mur2Ac(oyl-L-Ala-gamma-D-Glu-L-Lys-D-Ala-D-Ala)-di-trans,octa-cis-undecaprenyl diphosphate = [GlcNAc-(1-&gt;4)-Mur2Ac(oyl-L-Ala-gamma-D-Glu-L-Lys-D-Ala-D-Ala)](n+1)-di-trans,octa-cis-undecaprenyl diphosphate + di-trans,octa-cis-undecaprenyl diphosphate + H(+). It catalyses the reaction Preferential cleavage: (Ac)2-L-Lys-D-Ala-|-D-Ala. Also transpeptidation of peptidyl-alanyl moieties that are N-acyl substituents of D-alanine.. It participates in cell wall biogenesis; peptidoglycan biosynthesis. In terms of biological role, cell wall formation. Synthesis of cross-linked peptidoglycan from the lipid intermediates. The enzyme has a penicillin-insensitive transglycosylase N-terminal domain (formation of linear glycan strands) and a penicillin-sensitive transpeptidase C-terminal domain (cross-linking of the peptide subunits). This chain is Penicillin-binding protein 1B (mrcB), found in Haemophilus influenzae (strain ATCC 51907 / DSM 11121 / KW20 / Rd).